The primary structure comprises 259 residues: MALLQKTRKINAMLQNAAGKPVNFKEMAETLRDVIDSNIFVVSRRGKLLGFSINQQIENDRMKKMLEERQFPEDYTKSLFNIPETSSNLDINSEYTAFPVENRDLFQAGLTTVVPIIGGGERLGTLILSRLQEKFEDDDLILAEYGATVVGMEILREKAEEIEEEARSKAVVQMAISSLSYSELEAIEHIFEELDGNEGLLVASKIADRVGITRSVIVNALRKLESAGVIESRSLGMKGTYIKVLNNKFLMELEKLKSH.

The interval 1–155 is GAF domain; that stretch reads MALLQKTRKI…GATVVGMEIL (155 aa). A DNA-binding region (H-T-H motif) is located at residues 203–222; the sequence is ASKIADRVGITRSVIVNALR. Serine 215 is subject to Phosphoserine.

Belongs to the CodY family.

It localises to the cytoplasm. Its function is as follows. DNA-binding global transcriptional regulator which is involved in the adaptive response to starvation and acts by directly or indirectly controlling the expression of numerous genes in response to nutrient availability. During rapid exponential growth, CodY is highly active and represses genes whose products allow adaptation to nutrient depletion. In Bacillus licheniformis (strain ATCC 14580 / DSM 13 / JCM 2505 / CCUG 7422 / NBRC 12200 / NCIMB 9375 / NCTC 10341 / NRRL NRS-1264 / Gibson 46), this protein is Global transcriptional regulator CodY.